Here is a 336-residue protein sequence, read N- to C-terminus: Putative transcription factor avaE (336 aa).

Residues 32–100 constitute a DNA-binding region (WRKY); the sequence is TATRLNQTTF…VPLDQNESMP (69 aa).

It localises to the nucleus. It functions in the pathway secondary metabolite biosynthesis. Functionally, putative transcription factor; part of the cluster that mediates the biosynthesis of a highly modified cyclo-arginine-tryptophan dipeptide (cRW). The chain is Putative transcription factor avaE from Aspergillus versicolor.